The following is a 337-amino-acid chain: Diacylglycerol acyltransferase/mycolyltransferase Ag85A (337 aa).

The first 42 residues, 1 to 42 (MKLVDRFRGAATGTSRRLMVGAVGAALLSGLVGFVGGSATAS), serve as a signal peptide directing secretion. 85–86 (MR) lines the substrate pocket. Residues 101–111 (FEWYYQSGISV) form a fibronectin-binding region. Residues C130 and C135 are joined by a disulfide bond. Positions 169 and 197 each coordinate substrate. The active-site Nucleophile is the S169. E273 is a catalytic residue. Substrate contacts are provided by residues 275–278 (FVRT), K282, and 305–307 (HSW). The active site involves H305.

The protein belongs to the mycobacterial A85 antigen family. In terms of assembly, homodimer.

It is found in the secreted. Its subcellular location is the cell wall. It localises to the cytoplasm. It catalyses the reaction an acyl-CoA + a 1,2-diacyl-sn-glycerol = a triacyl-sn-glycerol + CoA. The catalysed reaction is 2 alpha,alpha'-trehalose 6-mycolate = alpha,alpha'-trehalose 6,6'-bismycolate + alpha,alpha-trehalose. The antigen 85 proteins (FbpA, FbpB, FbpC) are responsible for the high affinity of mycobacteria for fibronectin, a large adhesive glycoprotein, which facilitates the attachment of M.tuberculosis to murine alveolar macrophages (AMs). They also help to maintain the integrity of the cell wall by catalyzing the transfer of mycolic acids to cell wall arabinogalactan, and through the synthesis of alpha,alpha-trehalose dimycolate (TDM, cord factor). They catalyze the transfer of a mycoloyl residue from one molecule of alpha,alpha-trehalose monomycolate (TMM) to another TMM, leading to the formation of TDM. FbpA mediates triacylglycerol (TAG) formation with long-chain acyl-CoA as the acyl donor and 1,2-dipalmitoyl-sn-glycerol (1,2-dipalmitin) as the acyl acceptor. It has a preference for C26:0-CoA over C18:1-CoA. The protein is Diacylglycerol acyltransferase/mycolyltransferase Ag85A (fbpA) of Mycobacterium ulcerans.